The following is a 107-amino-acid chain: Putative double-stranded DNA mimic protein Asuc_1259 (107 aa).

It belongs to the putative dsDNA mimic protein family.

Its function is as follows. May act as a double-stranded DNA (dsDNA) mimic. Probably regulates the activity of a dsDNA-binding protein. The polypeptide is Putative double-stranded DNA mimic protein Asuc_1259 (Actinobacillus succinogenes (strain ATCC 55618 / DSM 22257 / CCUG 43843 / 130Z)).